Consider the following 190-residue polypeptide: MSRPLVFVTGNAKKLEEVVTILGNNFPAKLVSQSVDLPELQGEIEDICKKKCLEAAKIVQGPVLVEDTCLCFNALGGLPGPYIKWFLEKLGPEGLSKLLTGWEDKTATAICTIAYSSGDQNEDVILFQGQTTGKIVEPRGTRIFGWDPCFLPDGYDQTYAEMPKSEKNKISHRTKAVEKLRTYFTEKLNF.

Residue 9–14 (TGNAKK) participates in ITP binding. Glu39 provides a ligand contact to Mg(2+). ITP is bound by residues Lys51, 67 to 68 (DT), Lys84, 144 to 147 (FGWD), Lys167, and 172 to 173 (HR).

This sequence belongs to the HAM1 NTPase family. Homodimer. The cofactor is Mg(2+). It depends on Mn(2+) as a cofactor.

It localises to the cytoplasm. It catalyses the reaction ITP + H2O = IMP + diphosphate + H(+). The enzyme catalyses dITP + H2O = dIMP + diphosphate + H(+). The catalysed reaction is XTP + H2O = XMP + diphosphate + H(+). Functionally, pyrophosphatase that hydrolyzes non-canonical purine nucleotides such as inosine triphosphate (ITP), deoxyinosine triphosphate (dITP) or xanthosine 5'-triphosphate (XTP) to their respective monophosphate derivatives. The enzyme does not distinguish between the deoxy- and ribose forms. Probably excludes non-canonical purines from RNA and DNA precursor pools, thus preventing their incorporation into RNA and DNA and avoiding chromosomal lesions. The chain is Inosine triphosphate pyrophosphatase from Pediculus humanus subsp. corporis (Body louse).